The primary structure comprises 25 residues: Toxin Tpa3 (25 aa).

It belongs to the non-disulfide-bridged peptide (NDBP) superfamily. Expressed by the venom gland.

Its subcellular location is the secreted. Functionally, unknown. Is not toxic to mammals. This Tityus pachyurus (Colombian scorpion) protein is Toxin Tpa3.